The chain runs to 279 residues: Phenylalanine 3-hydroxylase (279 aa).

3 residues coordinate Fe cation: H140, H145, and E186.

Belongs to the biopterin-dependent aromatic amino acid hydroxylase family. Fe(2+) serves as cofactor.

It carries out the reaction (6R)-L-erythro-5,6,7,8-tetrahydrobiopterin + L-phenylalanine + O2 = 3-hydroxy-L-phenylalanine + (4aS,6R)-4a-hydroxy-L-erythro-5,6,7,8-tetrahydrobiopterin. Its function is as follows. In vitro, catalyzes the highly regiospecific C-3 hydroxylation of L-phenylalanine (L-Phe) to yield 3-hydroxy-L-phenylalanine (meta-Tyr), an amino acid found in bacterial secondary metabolites such as sanglifehrin A and some pacidamycins. Tetrahydrobiopterin (BH4) seems to be the physiological pterin, however the hydroxylase is also able to use 6-methyltetrahydropterin (6-MePH4). This Streptomyces coeruleorubidus protein is Phenylalanine 3-hydroxylase.